The following is a 145-amino-acid chain: Basic phospholipase A2 S11-61 (145 aa).

An N-terminal signal peptide occupies residues 1–19 (MYPVHLLVLLAVCVSLLGA). The propeptide occupies 20-27 (SNIPPQPL). Disulfide bonds link C38–C98, C54–C144, C56–C72, C71–C125, C78–C118, C87–C111, and C105–C116. Ca(2+) contacts are provided by Y55, G57, and G59. Residue H75 is part of the active site. D76 contributes to the Ca(2+) binding site. D119 is a catalytic residue.

The protein belongs to the phospholipase A2 family. Group I subfamily. D49 sub-subfamily. Ca(2+) is required as a cofactor. In terms of tissue distribution, expressed by the venom gland.

It localises to the secreted. It carries out the reaction a 1,2-diacyl-sn-glycero-3-phosphocholine + H2O = a 1-acyl-sn-glycero-3-phosphocholine + a fatty acid + H(+). Functionally, snake venom phospholipase A2 (PLA2) that inhibits collagen-induced platelet aggregation. PLA2 catalyzes the calcium-dependent hydrolysis of the 2-acyl groups in 3-sn-phosphoglycerides. The chain is Basic phospholipase A2 S11-61 from Austrelaps superbus (Lowland copperhead snake).